The following is a 179-amino-acid chain: Large ribosomal subunit protein uL6 (179 aa).

The protein belongs to the universal ribosomal protein uL6 family. As to quaternary structure, part of the 50S ribosomal subunit.

Functionally, this protein binds to the 23S rRNA, and is important in its secondary structure. It is located near the subunit interface in the base of the L7/L12 stalk, and near the tRNA binding site of the peptidyltransferase center. The chain is Large ribosomal subunit protein uL6 from Pseudomonas savastanoi pv. phaseolicola (strain 1448A / Race 6) (Pseudomonas syringae pv. phaseolicola (strain 1448A / Race 6)).